Reading from the N-terminus, the 416-residue chain is Adenylosuccinate synthetase (416 aa).

GTP-binding positions include 13 to 19 and 41 to 43; these read GDEGKGK and GHT. The active-site Proton acceptor is the D14. Residues D14 and G41 each coordinate Mg(2+). IMP is bound by residues 14-17, 39-42, T126, R140, Q220, T235, and R299; these read DEGK and NAGH. The active-site Proton donor is the H42. Position 295-301 (295-301) interacts with substrate; sequence TTTGRKR. Residues R301, 327–329, and 405–407 each bind GTP; these read KLD and STS.

It belongs to the adenylosuccinate synthetase family. In terms of assembly, homodimer. Mg(2+) serves as cofactor.

The protein localises to the cytoplasm. The enzyme catalyses IMP + L-aspartate + GTP = N(6)-(1,2-dicarboxyethyl)-AMP + GDP + phosphate + 2 H(+). The protein operates within purine metabolism; AMP biosynthesis via de novo pathway; AMP from IMP: step 1/2. Its function is as follows. Plays an important role in the de novo pathway of purine nucleotide biosynthesis. Catalyzes the first committed step in the biosynthesis of AMP from IMP. The polypeptide is Adenylosuccinate synthetase (Campylobacter hominis (strain ATCC BAA-381 / DSM 21671 / CCUG 45161 / LMG 19568 / NCTC 13146 / CH001A)).